A 238-amino-acid polypeptide reads, in one-letter code: Urease subunit alpha (238 aa).

The interval 1-102 (MKLTPKELDK…LVTVHTPIES (102 aa)) is urease gamma. A urease beta region spans residues 103 to 238 (KGKLVPGELF…DDNYVKTIKE (136 aa)).

It in the N-terminal section; belongs to the urease gamma subunit family. The protein in the C-terminal section; belongs to the urease beta subunit family. As to quaternary structure, heterohexamer of 3 UreA (alpha) and 3 UreB (beta) subunits.

It is found in the cytoplasm. It carries out the reaction urea + 2 H2O + H(+) = hydrogencarbonate + 2 NH4(+). It participates in nitrogen metabolism; urea degradation; CO(2) and NH(3) from urea (urease route): step 1/1. In Helicobacter acinonychis (strain Sheeba), this protein is Urease subunit alpha.